We begin with the raw amino-acid sequence, 129 residues long: Prefoldin subunit 6 (129 aa).

Residue Ala2 is modified to N-acetylalanine. Lys21 carries the post-translational modification N6-acetyllysine. Lys66 bears the N6-acetyllysine; alternate mark. A Glycyl lysine isopeptide (Lys-Gly) (interchain with G-Cter in SUMO1); alternate cross-link involves residue Lys66. Residue Lys66 forms a Glycyl lysine isopeptide (Lys-Gly) (interchain with G-Cter in SUMO2); alternate linkage.

This sequence belongs to the prefoldin subunit beta family. In terms of assembly, heterohexamer of two PFD-alpha type and four PFD-beta type subunits. Component of the PAQosome complex which is responsible for the biogenesis of several protein complexes and which consists of R2TP complex members RUVBL1, RUVBL2, RPAP3 and PIH1D1, URI complex members PFDN2, PFDN6, PDRG1, UXT and URI1 as well as ASDURF, POLR2E and DNAAF10/WDR92.

Its function is as follows. Binds specifically to cytosolic chaperonin (c-CPN) and transfers target proteins to it. Binds to nascent polypeptide chain and promotes folding in an environment in which there are many competing pathways for nonnative proteins. This chain is Prefoldin subunit 6 (PFDN6), found in Bos taurus (Bovine).